A 251-amino-acid chain; its full sequence is Probable transcriptional regulatory protein NFA_37020 (251 aa).

It belongs to the TACO1 family.

The protein resides in the cytoplasm. The polypeptide is Probable transcriptional regulatory protein NFA_37020 (Nocardia farcinica (strain IFM 10152)).